Here is a 220-residue protein sequence, read N- to C-terminus: Thiamine-phosphate synthase (220 aa).

Residues 46 to 50 and N83 each bind 4-amino-2-methyl-5-(diphosphooxymethyl)pyrimidine; that span reads QFREK. Residues D84 and D103 each coordinate Mg(2+). S122 is a 4-amino-2-methyl-5-(diphosphooxymethyl)pyrimidine binding site. Residue 149-151 participates in 2-[(2R,5Z)-2-carboxy-4-methylthiazol-5(2H)-ylidene]ethyl phosphate binding; it reads TNS. K152 provides a ligand contact to 4-amino-2-methyl-5-(diphosphooxymethyl)pyrimidine. 2-[(2R,5Z)-2-carboxy-4-methylthiazol-5(2H)-ylidene]ethyl phosphate-binding positions include G181 and 201 to 202; that span reads IS.

This sequence belongs to the thiamine-phosphate synthase family. Mg(2+) is required as a cofactor.

The catalysed reaction is 2-[(2R,5Z)-2-carboxy-4-methylthiazol-5(2H)-ylidene]ethyl phosphate + 4-amino-2-methyl-5-(diphosphooxymethyl)pyrimidine + 2 H(+) = thiamine phosphate + CO2 + diphosphate. It catalyses the reaction 2-(2-carboxy-4-methylthiazol-5-yl)ethyl phosphate + 4-amino-2-methyl-5-(diphosphooxymethyl)pyrimidine + 2 H(+) = thiamine phosphate + CO2 + diphosphate. It carries out the reaction 4-methyl-5-(2-phosphooxyethyl)-thiazole + 4-amino-2-methyl-5-(diphosphooxymethyl)pyrimidine + H(+) = thiamine phosphate + diphosphate. The protein operates within cofactor biosynthesis; thiamine diphosphate biosynthesis; thiamine phosphate from 4-amino-2-methyl-5-diphosphomethylpyrimidine and 4-methyl-5-(2-phosphoethyl)-thiazole: step 1/1. Functionally, condenses 4-methyl-5-(beta-hydroxyethyl)thiazole monophosphate (THZ-P) and 2-methyl-4-amino-5-hydroxymethyl pyrimidine pyrophosphate (HMP-PP) to form thiamine monophosphate (TMP). This Mannheimia succiniciproducens (strain KCTC 0769BP / MBEL55E) protein is Thiamine-phosphate synthase.